The chain runs to 558 residues: 2-isopropylmalate synthase (558 aa).

The region spanning 30–303 (PIWCSVDLRD…DPKLDCSDIE (274 aa)) is the Pyruvate carboxyltransferase domain. D39, H242, H244, and N278 together coordinate Mg(2+). Residues 437–558 (QPGARIKFVD…ANRVLDVVGK (122 aa)) are regulatory domain.

The protein belongs to the alpha-IPM synthase/homocitrate synthase family. LeuA type 2 subfamily. In terms of assembly, homodimer. The cofactor is Mg(2+).

Its subcellular location is the cytoplasm. The catalysed reaction is 3-methyl-2-oxobutanoate + acetyl-CoA + H2O = (2S)-2-isopropylmalate + CoA + H(+). It participates in amino-acid biosynthesis; L-leucine biosynthesis; L-leucine from 3-methyl-2-oxobutanoate: step 1/4. Its function is as follows. Catalyzes the condensation of the acetyl group of acetyl-CoA with 3-methyl-2-oxobutanoate (2-ketoisovalerate) to form 3-carboxy-3-hydroxy-4-methylpentanoate (2-isopropylmalate). This is 2-isopropylmalate synthase from Rhizobium meliloti (strain 1021) (Ensifer meliloti).